Reading from the N-terminus, the 100-residue chain is Large ribosomal subunit protein bL28 (100 aa).

Residues 1–25 are disordered; sequence MTRRCDITGKSVLSGNNVSHANNKS. A compositionally biased stretch (polar residues) spans 11-22; it reads SVLSGNNVSHAN.

Belongs to the bacterial ribosomal protein bL28 family.

This Acidiphilium cryptum (strain JF-5) protein is Large ribosomal subunit protein bL28.